A 408-amino-acid polypeptide reads, in one-letter code: 1-deoxy-D-xylulose 5-phosphate reductoisomerase (408 aa).

Positions 27, 28, 29, 30, 53, 54, 55, and 140 each coordinate NADPH. Residue lysine 141 coordinates 1-deoxy-D-xylulose 5-phosphate. Glutamate 142 serves as a coordination point for NADPH. Aspartate 166 is a binding site for Mn(2+). Positions 167, 168, 192, and 215 each coordinate 1-deoxy-D-xylulose 5-phosphate. Glutamate 168 provides a ligand contact to Mn(2+). Glycine 221 contributes to the NADPH binding site. 4 residues coordinate 1-deoxy-D-xylulose 5-phosphate: serine 228, asparagine 233, lysine 234, and glutamate 237. Glutamate 237 is a binding site for Mn(2+).

It belongs to the DXR family. Mg(2+) is required as a cofactor. It depends on Mn(2+) as a cofactor.

It carries out the reaction 2-C-methyl-D-erythritol 4-phosphate + NADP(+) = 1-deoxy-D-xylulose 5-phosphate + NADPH + H(+). It participates in isoprenoid biosynthesis; isopentenyl diphosphate biosynthesis via DXP pathway; isopentenyl diphosphate from 1-deoxy-D-xylulose 5-phosphate: step 1/6. Its function is as follows. Catalyzes the NADPH-dependent rearrangement and reduction of 1-deoxy-D-xylulose-5-phosphate (DXP) to 2-C-methyl-D-erythritol 4-phosphate (MEP). The polypeptide is 1-deoxy-D-xylulose 5-phosphate reductoisomerase (Nitratidesulfovibrio vulgaris (strain ATCC 29579 / DSM 644 / CCUG 34227 / NCIMB 8303 / VKM B-1760 / Hildenborough) (Desulfovibrio vulgaris)).